The chain runs to 363 residues: Chorismate synthase (363 aa).

R48 and R54 together coordinate NADP(+). Residues 125–127 (RSS), 237–238 (NA), G277, 292–296 (KPTSS), and R318 contribute to the FMN site.

Belongs to the chorismate synthase family. As to quaternary structure, homotetramer. Requires FMNH2 as cofactor.

The catalysed reaction is 5-O-(1-carboxyvinyl)-3-phosphoshikimate = chorismate + phosphate. The protein operates within metabolic intermediate biosynthesis; chorismate biosynthesis; chorismate from D-erythrose 4-phosphate and phosphoenolpyruvate: step 7/7. Catalyzes the anti-1,4-elimination of the C-3 phosphate and the C-6 proR hydrogen from 5-enolpyruvylshikimate-3-phosphate (EPSP) to yield chorismate, which is the branch point compound that serves as the starting substrate for the three terminal pathways of aromatic amino acid biosynthesis. This reaction introduces a second double bond into the aromatic ring system. In Pseudomonas fluorescens (strain Pf0-1), this protein is Chorismate synthase.